We begin with the raw amino-acid sequence, 201 residues long: 3-isopropylmalate dehydratase small subunit (201 aa).

It belongs to the LeuD family. LeuD type 1 subfamily. In terms of assembly, heterodimer of LeuC and LeuD.

It catalyses the reaction (2R,3S)-3-isopropylmalate = (2S)-2-isopropylmalate. It functions in the pathway amino-acid biosynthesis; L-leucine biosynthesis; L-leucine from 3-methyl-2-oxobutanoate: step 2/4. In terms of biological role, catalyzes the isomerization between 2-isopropylmalate and 3-isopropylmalate, via the formation of 2-isopropylmaleate. The protein is 3-isopropylmalate dehydratase small subunit of Shewanella sp. (strain MR-7).